The primary structure comprises 657 residues: Leishmanolysin (657 aa).

The first 41 residues, Met1–Ala41, serve as a signal peptide directing secretion. Residues His42 to Val102 constitute a propeptide, activation peptide. At Gly44–Ala611 the chain is on the extracellular side. The N-linked (GlcNAc...) asparagine glycan is linked to Asn107. 2 cysteine pairs are disulfide-bonded: Cys127–Cys144 and Cys193–Cys232. Zn(2+) is bound at residue His266. Glu267 is an active-site residue. His270 is a Zn(2+) binding site. N-linked (GlcNAc...) asparagine glycosylation occurs at Asn302. 7 cysteine pairs are disulfide-bonded: Cys316/Cys388, Cys395/Cys458, Cys408/Cys427, Cys417/Cys492, Cys469/Cys513, Cys518/Cys568, and Cys538/Cys561. His336 provides a ligand contact to Zn(2+). Residues Asn399, Asn409, Asn445, Asn466, and Asn501 are each glycosylated (N-linked (GlcNAc...) asparagine). A helical transmembrane segment spans residues Thr612 to Val632. Topologically, residues Ser633–Glu657 are cytoplasmic.

The protein belongs to the peptidase M8 family. It depends on Zn(2+) as a cofactor.

It localises to the membrane. It carries out the reaction Preference for hydrophobic residues at P1 and P1' and basic residues at P2' and P3'. A model nonapeptide is cleaved at -Ala-Tyr-|-Leu-Lys-Lys-.. Has an integral role during the infection of macrophages in the mammalian host. This chain is Leishmanolysin (mspC), found in Leishmania tropica.